We begin with the raw amino-acid sequence, 119 residues long: Large ribosomal subunit protein uL18 (119 aa).

The protein belongs to the universal ribosomal protein uL18 family. As to quaternary structure, part of the 50S ribosomal subunit; part of the 5S rRNA/L5/L18/L25 subcomplex. Contacts the 5S and 23S rRNAs.

Functionally, this is one of the proteins that bind and probably mediate the attachment of the 5S RNA into the large ribosomal subunit, where it forms part of the central protuberance. This is Large ribosomal subunit protein uL18 from Cereibacter sphaeroides (strain ATCC 17025 / ATH 2.4.3) (Rhodobacter sphaeroides).